Here is a 226-residue protein sequence, read N- to C-terminus: Ribosomal RNA large subunit methyltransferase E (226 aa).

S-adenosyl-L-methionine-binding residues include G82, W84, D100, D116, and D140. The active-site Proton acceptor is K180.

This sequence belongs to the class I-like SAM-binding methyltransferase superfamily. RNA methyltransferase RlmE family.

It is found in the cytoplasm. The enzyme catalyses uridine(2552) in 23S rRNA + S-adenosyl-L-methionine = 2'-O-methyluridine(2552) in 23S rRNA + S-adenosyl-L-homocysteine + H(+). Its function is as follows. Specifically methylates the uridine in position 2552 of 23S rRNA at the 2'-O position of the ribose in the fully assembled 50S ribosomal subunit. The chain is Ribosomal RNA large subunit methyltransferase E from Caulobacter sp. (strain K31).